Consider the following 237-residue polypeptide: Ribonuclease PH (237 aa).

Residues Arg-86 and 124–126 (GTR) contribute to the phosphate site.

The protein belongs to the RNase PH family. In terms of assembly, homohexameric ring arranged as a trimer of dimers.

The enzyme catalyses tRNA(n+1) + phosphate = tRNA(n) + a ribonucleoside 5'-diphosphate. In terms of biological role, phosphorolytic 3'-5' exoribonuclease that plays an important role in tRNA 3'-end maturation. Removes nucleotide residues following the 3'-CCA terminus of tRNAs; can also add nucleotides to the ends of RNA molecules by using nucleoside diphosphates as substrates, but this may not be physiologically important. Probably plays a role in initiation of 16S rRNA degradation (leading to ribosome degradation) during starvation. In Methylorubrum populi (strain ATCC BAA-705 / NCIMB 13946 / BJ001) (Methylobacterium populi), this protein is Ribonuclease PH.